A 131-amino-acid polypeptide reads, in one-letter code: D-ribose pyranase (131 aa).

The active-site Proton donor is histidine 20. Substrate contacts are provided by residues aspartate 28, histidine 98, and 120 to 122 (YSN).

The protein belongs to the RbsD / FucU family. RbsD subfamily. Homodecamer.

The protein localises to the cytoplasm. The enzyme catalyses beta-D-ribopyranose = beta-D-ribofuranose. The protein operates within carbohydrate metabolism; D-ribose degradation; D-ribose 5-phosphate from beta-D-ribopyranose: step 1/2. Catalyzes the interconversion of beta-pyran and beta-furan forms of D-ribose. This chain is D-ribose pyranase, found in Lactiplantibacillus plantarum (strain ATCC BAA-793 / NCIMB 8826 / WCFS1) (Lactobacillus plantarum).